Consider the following 232-residue polypeptide: MKELQTVLKNHFAIEFADKKLLETAFTHTSYANEHRLLKISHNERLEFLGDAVLQLLISEYLYKKYPKKPEGDLSKLRAMIVREESLAGFARDCQFDQFIKLGKGEEKSGGRNRDTILGDAFEAFLGALLLDKDVAKVKEFIYQVMIPKVEAGEFEMITDYKTHLQELLQVNGDVAIRYQVISETGPAHDKVFDVEVLVEGKSIGQGQGRSKKLAEQEAAKNAVEKGLDSCI.

The RNase III domain occupies 5 to 134 (QTVLKNHFAI…FLGALLLDKD (130 aa)). Mg(2+) is bound at residue E47. D51 is an active-site residue. Positions 120 and 123 each coordinate Mg(2+). E123 is a catalytic residue. Residues 160–229 (DYKTHLQELL…AKNAVEKGLD (70 aa)) form the DRBM domain.

This sequence belongs to the ribonuclease III family. In terms of assembly, homodimer. Mg(2+) serves as cofactor.

The protein resides in the cytoplasm. It catalyses the reaction Endonucleolytic cleavage to 5'-phosphomonoester.. In terms of biological role, digests double-stranded RNA. Involved in the processing of primary rRNA transcript to yield the immediate precursors to the large and small rRNAs (23S and 16S). Processes some mRNAs, and tRNAs when they are encoded in the rRNA operon. Processes pre-crRNA and tracrRNA of type II CRISPR loci if present in the organism. This is Ribonuclease 3 from Streptococcus pneumoniae serotype 4 (strain ATCC BAA-334 / TIGR4).